The following is a 945-amino-acid chain: Isoleucine--tRNA ligase (945 aa).

Positions 66–76 (PYANGDIHLGH) match the 'HIGH' region motif. Glu-581 lines the L-isoleucyl-5'-AMP pocket. A 'KMSKS' region motif is present at residues 622–626 (KMSKS). Lys-625 provides a ligand contact to ATP. Positions 908, 911, 928, and 931 each coordinate Zn(2+).

This sequence belongs to the class-I aminoacyl-tRNA synthetase family. IleS type 1 subfamily. As to quaternary structure, monomer. Zn(2+) serves as cofactor.

The protein localises to the cytoplasm. It catalyses the reaction tRNA(Ile) + L-isoleucine + ATP = L-isoleucyl-tRNA(Ile) + AMP + diphosphate. Its function is as follows. Catalyzes the attachment of isoleucine to tRNA(Ile). As IleRS can inadvertently accommodate and process structurally similar amino acids such as valine, to avoid such errors it has two additional distinct tRNA(Ile)-dependent editing activities. One activity is designated as 'pretransfer' editing and involves the hydrolysis of activated Val-AMP. The other activity is designated 'posttransfer' editing and involves deacylation of mischarged Val-tRNA(Ile). This is Isoleucine--tRNA ligase from Paraburkholderia xenovorans (strain LB400).